The chain runs to 71 residues: uncharacterized protein (71 aa).

The helical transmembrane segment at 5 to 22 threads the bilayer; it reads VVMCSGLFCSVFAGAFML.

The protein resides in the membrane. This is an uncharacterized protein from Bacillus subtilis (strain 168).